A 252-amino-acid chain; its full sequence is MTAEKREAKVVLVDIEGTTTSISFVHQVLFPHAKENVEKYLKEYWENEETKQIVEDLQQVPQYADYQATLSAPPAVVDVKVIAGFVRYLIDKDLKVTPMKTLQGLIWACGYASGELKGHVYEDVPDAFRAWQKAGLRIAVYSSGSVDAQKLIFGYSVAGNLLPYLSDHFDTHVGHKQEQQSYVNISNSLREKPQNILFLTDIPGEASAALSAGLQTIILHRPGNGPLSDDQKSNYEVIPDFKSLYSLQLPQK.

Residues Asp14 and Glu16 each contribute to the Mg(2+) site. Residues 142-143 (SS) and Lys176 each bind substrate. Position 201 (Asp201) interacts with Mg(2+).

It belongs to the HAD-like hydrolase superfamily. MasA/MtnC family. In terms of assembly, monomer. Mg(2+) is required as a cofactor.

The protein resides in the cytoplasm. Its subcellular location is the nucleus. It catalyses the reaction 5-methylsulfanyl-2,3-dioxopentyl phosphate + H2O = 1,2-dihydroxy-5-(methylsulfanyl)pent-1-en-3-one + phosphate. The protein operates within amino-acid biosynthesis; L-methionine biosynthesis via salvage pathway; L-methionine from S-methyl-5-thio-alpha-D-ribose 1-phosphate: step 3/6. It participates in amino-acid biosynthesis; L-methionine biosynthesis via salvage pathway; L-methionine from S-methyl-5-thio-alpha-D-ribose 1-phosphate: step 4/6. Its function is as follows. Bifunctional enzyme that catalyzes the enolization of 2,3-diketo-5-methylthiopentyl-1-phosphate (DK-MTP-1-P) into the intermediate 2-hydroxy-3-keto-5-methylthiopentenyl-1-phosphate (HK-MTPenyl-1-P), which is then dephosphorylated to form the acireductone 1,2-dihydroxy-3-keto-5-methylthiopentene (DHK-MTPene). The polypeptide is Enolase-phosphatase E1 (Drosophila ananassae (Fruit fly)).